The sequence spans 562 residues: Glucocorticoid modulatory element-binding protein 1 (562 aa).

N-acetylalanine is present on Ala2. Positions 72 to 156 (ASSIEGNEDM…RKMMDSGQID (85 aa)) constitute an SAND domain. Cys103 lines the Zn(2+) pocket. Residues Lys129, Lys133, Lys136, and Arg147 each contribute to the DNA site. Positions 160, 164, and 168 each coordinate Zn(2+). Positions 311–355 (LDNRRKQVEQGEEQFLYTLADLERQLEEQKKQAQDPRLKSQTVQN) form a coiled coil. The disordered stretch occupies residues 360–384 (PVSTPKPPKRPRLQRPASTTVLSPS). Polar residues predominate over residues 375–384 (PASTTVLSPS).

Homodimer, and heterodimer of GMEB1 and GMEB2. Interacts with TRIM63. Interacts with the glucocorticoid receptor (NR3C1) and NCOA2/TIF2. May interact with HSP27 and CREB-binding protein (CBP). Ubiquitous. Low levels were detected in heart, brain, spleen, lung, liver, skeletal muscle, kidney and testis.

The protein localises to the nucleus. It is found in the cytoplasm. Trans-acting factor that binds to glucocorticoid modulatory elements (GME) present in the TAT (tyrosine aminotransferase) promoter and increases sensitivity to low concentrations of glucocorticoids. Also binds to the transferrin receptor promoter. This Mus musculus (Mouse) protein is Glucocorticoid modulatory element-binding protein 1 (Gmeb1).